We begin with the raw amino-acid sequence, 555 residues long: Alpha-1,2-mannosyltransferase ALG9 (555 aa).

The Cytoplasmic portion of the chain corresponds to 1–7; the sequence is MNCKAVT. The chain crosses the membrane as a helical span at residues 8 to 28; it reads ISLLLLLFLTRVYIQPTFSLI. At 29–62 the chain is on the lumenal side; sequence SDCDETFNYWEPLNLLVRGFGKQTWEYSPEYSIR. A helical membrane pass occupies residues 63–83; sequence SWAFLLPFYCILYPVNKFTDL. At 84–86 the chain is on the cytoplasmic side; the sequence is ESH. The chain crosses the membrane as a helical span at residues 87–107; that stretch reads WNFFITRACLGFFSFIMEFKL. The Lumenal segment spans residues 108-113; that stretch reads HREIAG. A helical membrane pass occupies residues 114–134; the sequence is SLALQIANIWIIFQLFNPGWF. Topologically, residues 135–176 are cytoplasmic; sequence HASVELLPSAVAMLLYVGATRHSLRYLSTGSTSNFTKSLAYN. Residues 177–197 traverse the membrane as a helical segment; that stretch reads FLASILGWPFVLILSLPLCLH. The Lumenal portion of the chain corresponds to 198–213; it reads YLFNHRIISTIRTAFD. Residues 214-234 traverse the membrane as a helical segment; it reads CCLIFSLTAFAVIVTDSIFYG. Over 235 to 268 the chain is Cytoplasmic; sequence KLAPVSWNILFYNVINASEESGPNIFGVEPWYYY. The chain crosses the membrane as a helical span at residues 269 to 289; sequence PLNLLLNFPLPVLVLAILGIF. Over 290-316 the chain is Lumenal; sequence HLRLWPLWASLFTWIAVFTQQPHKEER. A helical membrane pass occupies residues 317–337; sequence FLYPIYGLITLSASIAFYKVL. Over 338-349 the chain is Cytoplasmic; sequence NLFNRKPILKKG. Residues 350–370 traverse the membrane as a helical segment; the sequence is IKLSVLLIVAGQAMSRIVALV. The Lumenal segment spans residues 371–555; sequence NNYTAPIAVY…LFEKPTETTN (185 aa).

The protein belongs to the glycosyltransferase 22 family.

Its subcellular location is the endoplasmic reticulum membrane. The enzyme catalyses an alpha-D-Man-(1-&gt;2)-alpha-D-Man-(1-&gt;2)-alpha-D-Man-(1-&gt;3)-[alpha-D-Man-(1-&gt;3)-alpha-D-Man-(1-&gt;6)]-beta-D-Man-(1-&gt;4)-beta-D-GlcNAc-(1-&gt;4)-alpha-D-GlcNAc-diphospho-di-trans,poly-cis-dolichol + a di-trans,poly-cis-dolichyl beta-D-mannosyl phosphate = an alpha-D-Man-(1-&gt;2)-alpha-D-Man-(1-&gt;2)-alpha-D-Man-(1-&gt;3)-[alpha-D-Man-(1-&gt;2)-alpha-D-Man-(1-&gt;3)-alpha-D-Man-(1-&gt;6)]-beta-D-Man-(1-&gt;4)-beta-D-GlcNAc-(1-&gt;4)-alpha-D-GlcNAc-diphospho-di-trans,poly-cis-dolichol + a di-trans,poly-cis-dolichyl phosphate + H(+). It catalyses the reaction an alpha-D-Man-(1-&gt;2)-alpha-D-Man-(1-&gt;2)-alpha-D-Man-(1-&gt;3)-[alpha-D-Man-(1-&gt;2)-alpha-D-Man-(1-&gt;3)-[alpha-D-Man-(1-&gt;6)]-alpha-D-Man-(1-&gt;6)]-beta-D-Man-(1-&gt;4)-beta-D-GlcNAc-(1-&gt;4)-alpha-D-GlcNAc-diphospho-di-trans,poly-cis-dolichol + a di-trans,poly-cis-dolichyl beta-D-mannosyl phosphate = an alpha-D-Man-(1-&gt;2)-alpha-D-Man-(1-&gt;2)-alpha-D-Man-(1-&gt;3)-[alpha-D-Man-(1-&gt;2)-alpha-D-Man-(1-&gt;3)-[alpha-D-Man-(1-&gt;2)-alpha-D-Man-(1-&gt;6)]-alpha-D-Man-(1-&gt;6)]-beta-D-Man-(1-&gt;4)-beta-D-GlcNAc-(1-&gt;4)-alpha-D-GlcNAc-diphospho-di-trans,poly-cis-dolichol + a di-trans,poly-cis-dolichyl phosphate + H(+). It functions in the pathway protein modification; protein glycosylation. In terms of biological role, mannosyltransferase that operates in the biosynthetic pathway of dolichol-linked oligosaccharides, the glycan precursors employed in protein asparagine (N)-glycosylation. The assembly of dolichol-linked oligosaccharides begins on the cytosolic side of the endoplasmic reticulum membrane and finishes in its lumen. The sequential addition of sugars to dolichol pyrophosphate produces dolichol-linked oligosaccharides containing fourteen sugars, including two GlcNAcs, nine mannoses and three glucoses. Once assembled, the oligosaccharide is transferred from the lipid to nascent proteins by oligosaccharyltransferases. In the lumen of the endoplasmic reticulum, catalyzes the addition of the seventh and ninth alpha-1,2-linked mannose residues to Man(6)GlcNAc(2)-PP-dolichol and Man(8)GlcNAc(2)-PP-dolichol respectively. This chain is Alpha-1,2-mannosyltransferase ALG9 (ALG9), found in Saccharomyces cerevisiae (strain ATCC 204508 / S288c) (Baker's yeast).